The following is a 376-amino-acid chain: N-acetyldiaminopimelate deacetylase (376 aa).

Asp-69 is an active-site residue. Catalysis depends on Glu-128, which acts as the Proton acceptor.

The protein belongs to the peptidase M20A family. N-acetyldiaminopimelate deacetylase subfamily.

It catalyses the reaction N-acetyl-(2S,6S)-2,6-diaminopimelate + H2O = (2S,6S)-2,6-diaminopimelate + acetate. Its pathway is amino-acid biosynthesis; L-lysine biosynthesis via DAP pathway; LL-2,6-diaminopimelate from (S)-tetrahydrodipicolinate (acetylase route): step 3/3. Catalyzes the conversion of N-acetyl-diaminopimelate to diaminopimelate and acetate. This Bacillus cytotoxicus (strain DSM 22905 / CIP 110041 / 391-98 / NVH 391-98) protein is N-acetyldiaminopimelate deacetylase.